A 150-amino-acid chain; its full sequence is Transcription antitermination protein NusB (150 aa).

This sequence belongs to the NusB family.

Functionally, involved in transcription antitermination. Required for transcription of ribosomal RNA (rRNA) genes. Binds specifically to the boxA antiterminator sequence of the ribosomal RNA (rrn) operons. The sequence is that of Transcription antitermination protein NusB from Chloroflexus aggregans (strain MD-66 / DSM 9485).